Reading from the N-terminus, the 217-residue chain is MKIVLLGAPGAGKGTLAKDLSIMFSVPHISTGDMFREAVAAGTELGVKVQNILSSGALVPDEIVNQVVEERLRKQDCEKGFIFDGYPRTIAQAIALDEILQKMSKKLDLAIYLEASEETVVKRLTSRRICPKCGKIYNLISMPPVSDQICDDCGEQLVIREDDKEEVVRKRYRLYLETTAPLVEYYSGRDILVSVNSERDHRKLVEDVSRLLKKVIS.

Residue 10-15 participates in ATP binding; the sequence is GAGKGT. The tract at residues 30–59 is NMP; that stretch reads STGDMFREAVAAGTELGVKVQNILSSGALV. Residues T31, R36, 57 to 59, 85 to 88, and Q92 contribute to the AMP site; these read ALV and GYPR. The tract at residues 126-163 is LID; it reads SRRICPKCGKIYNLISMPPVSDQICDDCGEQLVIREDD. Position 127 (R127) interacts with ATP. 2 residues coordinate Zn(2+): C130 and C133. 136–137 provides a ligand contact to ATP; that stretch reads IY. Positions 150 and 153 each coordinate Zn(2+). Residues R160 and R171 each contribute to the AMP site. ATP is bound at residue R199.

The protein belongs to the adenylate kinase family. In terms of assembly, monomer.

It localises to the cytoplasm. The catalysed reaction is AMP + ATP = 2 ADP. Its pathway is purine metabolism; AMP biosynthesis via salvage pathway; AMP from ADP: step 1/1. Its function is as follows. Catalyzes the reversible transfer of the terminal phosphate group between ATP and AMP. Plays an important role in cellular energy homeostasis and in adenine nucleotide metabolism. The sequence is that of Adenylate kinase from Pseudothermotoga lettingae (strain ATCC BAA-301 / DSM 14385 / NBRC 107922 / TMO) (Thermotoga lettingae).